The chain runs to 265 residues: Small ribosomal subunit protein eS1 (265 aa).

Disordered stretches follow at residues Met1–Asp24 and His240–Gln265. The segment covering His240 to Ala253 has biased composition (basic and acidic residues).

It belongs to the eukaryotic ribosomal protein eS1 family. Component of the small ribosomal subunit. Mature ribosomes consist of a small (40S) and a large (60S) subunit. The 40S subunit contains about 33 different proteins and 1 molecule of RNA (18S). The 60S subunit contains about 49 different proteins and 3 molecules of RNA (25S, 5.8S and 5S).

The protein localises to the cytoplasm. This is Small ribosomal subunit protein eS1 from Tetrahymena thermophila (strain SB210).